A 64-amino-acid chain; its full sequence is Disintegrin VB7B (64 aa).

The region spanning 1 to 64 (ELLQNSGNPC…TGISSDCPRN (64 aa)) is the Disintegrin domain. Disulfide bonds link Cys10-Cys33, Cys24-Cys30, Cys29-Cys54, and Cys42-Cys61. A Cell attachment site; atypical (KGD) motif is present at residues 46-48 (KGD).

It belongs to the venom metalloproteinase (M12B) family. P-II subfamily. P-IIe sub-subfamily. In terms of assembly, heterodimer with VB7A; disulfide-linked. As to expression, expressed by the venom gland.

The protein localises to the secreted. Poor inhibitor of platelet aggregation. The disintegrin inhibits the adhesion of cells expressing the RGD-dependent integrin alpha-5/beta-1 (ITGA5/ITGB1) to immobilized fibronectin. Inhibition on alpha-IIb/beta-3 (ITGA2B/ITGB3) is low. In Vipera berus berus (Common viper), this protein is Disintegrin VB7B.